A 317-amino-acid chain; its full sequence is Cytochrome f (317 aa).

An N-terminal signal peptide occupies residues 1-34 (MKGLKNQIMKKTSLFICTLLFISSIVFHPKITFA). Residues tyrosine 35, cysteine 55, cysteine 58, and histidine 59 each coordinate heme. The helical transmembrane segment at 284-304 (VIGLIAFFIGVGLTQILLVLK) threads the bilayer.

It belongs to the cytochrome f family. In terms of assembly, the 4 large subunits of the cytochrome b6-f complex are cytochrome b6, subunit IV (17 kDa polypeptide, PetD), cytochrome f and the Rieske protein, while the 4 small subunits are PetG, PetL, PetM and PetN. The complex functions as a dimer. The cofactor is heme.

The protein localises to the cellular thylakoid membrane. Functionally, component of the cytochrome b6-f complex, which mediates electron transfer between photosystem II (PSII) and photosystem I (PSI), cyclic electron flow around PSI, and state transitions. The protein is Cytochrome f of Prochlorococcus marinus (strain MIT 9301).